The chain runs to 876 residues: MSKSTAEIRQAFLDFFHSKGHQVVASSSLVPHNDPTLLFTNAGMNQFKDVFLGLDKRNYSRATTSQRCVRAGGKHNDLENVGYTARHHTFFEMLGNFSFGDYFKHDAIQFAWELLTSEKWFALPKERLWVTVYESDDEAYEIWEKEVGIPRERIIRIGDNKGAPYASDNFWQMGDTGPCGPCTEIFYDHGDHIWGGPPGSPEEDGDRYIEIWNIVFMQFNRQADGTMEPLPKPSVDTGMGLERIAAVLQHVNSNYDIDLFRTLIQAVAKVTGATDLSNKSLRVIADHIRSCAFLIADGVMPSNENRGYVLRRIIRRAVRHGNMLGAKETFFYKLVGPLIDVMGSAGEDLKRQQAQVEQVLKTEEEQFARTLERGLALLDEELAKLSGDTLDGETAFRLYDTYGFPVDLTADVCRERNIKVDEAGFEAAMEEQRRRAREASGFGADYNAMIRVDSASEFKGYDHLELNGKVTALFVDGKAVDAINAGQEAVVVLDQTPFYAESGGQVGDKGELKGANFSFAVEDTQKYGQAIGHIGKLAAGSLKVGDAVQADVDEARRARIRLNHSATHLMHAALRQVLGTHVSQKGSLVNDKVLRFDFSHNEAMKPEEIRAVEDLVNAQIRRNLPIETNIMDLEAAKAKGAMALFGEKYDERVRVLSMGDFSTELCGGTHASRTGDIGLFRIISESGTAAGVRRIEAVTGEGAIATVHADSDRLSEVAHLLKGDSNNLADKVRSVLERTRQLEKELQQLKEQAAAQESANLSSKAIDVNGVKLLVSELSGVEPKMLRTMVDDLKNQLGSTIIVLATVAEGKVSLIAGVSKDVTDRVKAGELIGMVAQQVGGKGGGRPDMAQAGGTDAAALPAALASVKGWVSAKLQ.

At Lys-74 the chain carries N6-acetyllysine. His-564, His-568, Cys-666, and His-670 together coordinate Zn(2+).

The protein belongs to the class-II aminoacyl-tRNA synthetase family. Homotetramer. Requires Zn(2+) as cofactor.

It is found in the cytoplasm. It catalyses the reaction tRNA(Ala) + L-alanine + ATP = L-alanyl-tRNA(Ala) + AMP + diphosphate. Catalyzes the attachment of alanine to tRNA(Ala) in a two-step reaction: alanine is first activated by ATP to form Ala-AMP and then transferred to the acceptor end of tRNA(Ala). Also edits incorrectly charged Ser-tRNA(Ala) and Gly-tRNA(Ala) via its editing domain. The polypeptide is Alanine--tRNA ligase (Escherichia coli O9:H4 (strain HS)).